Reading from the N-terminus, the 234-residue chain is Large ribosomal subunit protein uL1 (234 aa).

The protein belongs to the universal ribosomal protein uL1 family. In terms of assembly, part of the 50S ribosomal subunit.

Functionally, binds directly to 23S rRNA. The L1 stalk is quite mobile in the ribosome, and is involved in E site tRNA release. Protein L1 is also a translational repressor protein, it controls the translation of the L11 operon by binding to its mRNA. The chain is Large ribosomal subunit protein uL1 from Corynebacterium aurimucosum (strain ATCC 700975 / DSM 44827 / CIP 107346 / CN-1) (Corynebacterium nigricans).